Here is an 853-residue protein sequence, read N- to C-terminus: Trimethylguanosine synthase (853 aa).

Positions 53–80 (NNSGDQATEEEEGGYSCGTAESHDSKGI) are disordered. The residue at position 55 (Ser55) is a Phosphoserine. A Phosphothreonine modification is found at Thr60. Ser85, Ser89, Ser96, and Ser141 each carry phosphoserine. Tyr146 bears the Phosphotyrosine mark. The tract at residues 149–187 (DDILASDDPSSIEQYENTRTYELQSKKDTETENPPVENT) is disordered. Phosphoserine is present on Ser154. Polar residues predominate over residues 156–171 (DPSSIEQYENTRTYEL). Ser189 is subject to Phosphoserine. Disordered stretches follow at residues 334-461 (SQLD…GGIP) and 527-632 (DEEA…KKVN). Residues 367–382 (NGGTNEESNSSGNTNT) are compositionally biased toward low complexity. A phosphoserine mark is found at Ser412, Ser438, and Ser578. A compositionally biased stretch (acidic residues) spans 431–442 (DIDENPASDFDD). Over residues 564 to 578 (ETNNPEPEKCQSVSS) the composition is skewed to polar residues. The segment covering 608-619 (PDSRQAETEAEV) has biased composition (basic and acidic residues). Residues 620-630 (KKKKNKKKNKK) are compositionally biased toward basic residues. The segment at 631 to 846 (VNGLPPEIAA…TITAYFGDLI (216 aa)) is sufficient for catalytic activity. Asp719 serves as a coordination point for S-adenosyl-L-methionine. Residue Trp766 coordinates N(7)-methylguanosine.

Belongs to the methyltransferase superfamily. Trimethylguanosine synthase family. As to quaternary structure, may form homooligomers. Interacts with CREBBP/CBP, EED/WAIT1, EP300/P300, NCOA6/PRIP, PPARBP/PBP and SMN. As to expression, ubiquitously expressed. High expression in heart, skeletal muscle, kidney, liver and placenta.

Its subcellular location is the cytoplasm. The protein localises to the nucleus. The protein resides in the cajal body. It localises to the nucleolus. The enzyme catalyses a 5'-end (N(7)-methyl 5'-triphosphoguanosine)-ribonucleoside in snRNA + S-adenosyl-L-methionine = a 5'-end (N(2),N(7)-dimethyl 5'-triphosphoguanosine)-ribonucleoside in snRNA + S-adenosyl-L-homocysteine + H(+). The catalysed reaction is a 5'-end (N(7)-methyl 5'-triphosphoguanosine)-ribonucleoside in snoRNA + S-adenosyl-L-methionine = a 5'-end (N(2),N(7)-dimethyl 5'-triphosphoguanosine)-ribonucleoside in snoRNA + S-adenosyl-L-homocysteine + H(+). It catalyses the reaction a 5'-end (N(2),N(7)-dimethyl 5'-triphosphoguanosine)-ribonucleoside in snRNA + S-adenosyl-L-methionine = a 5'-end (N(2),N(2),N(7)-trimethyl 5'-triphosphoguanosine)-ribonucleoside in snRNA + S-adenosyl-L-homocysteine + H(+). It carries out the reaction a 5'-end (N(2),N(7)-dimethyl 5'-triphosphoguanosine)-ribonucleoside in snoRNA + S-adenosyl-L-methionine = a 5'-end (N(2),N(2),N(7)-trimethyl 5'-triphosphoguanosine)-ribonucleoside in snoRNA + S-adenosyl-L-homocysteine + H(+). In terms of biological role, catalyzes the 2 serial methylation steps for the conversion of the 7-monomethylguanosine (m(7)G) caps of snRNAs and snoRNAs to a 2,2,7-trimethylguanosine (m(2,2,7)G) cap structure. The enzyme is specific for guanine, and N7 methylation must precede N2 methylation. Hypermethylation of the m7G cap of U snRNAs leads to their concentration in nuclear foci, their colocalization with coilin and the formation of canonical Cajal bodies (CBs). Plays a role in transcriptional regulation. The protein is Trimethylguanosine synthase (TGS1) of Homo sapiens (Human).